Reading from the N-terminus, the 330-residue chain is Tryptophan--tRNA ligase (330 aa).

Residues 10–12 and 18–19 contribute to the ATP site; these read QAT and GN. A 'HIGH' region motif is present at residues 11-19; the sequence is ATGSLHLGN. D134 provides a ligand contact to L-tryptophan. ATP is bound by residues 146–148, I186, and 195–199; these read GED and KMSKS. The 'KMSKS' region motif lies at 195-199; sequence KMSKS.

Belongs to the class-I aminoacyl-tRNA synthetase family. As to quaternary structure, homodimer.

Its subcellular location is the cytoplasm. The catalysed reaction is tRNA(Trp) + L-tryptophan + ATP = L-tryptophyl-tRNA(Trp) + AMP + diphosphate + H(+). Its function is as follows. Catalyzes the attachment of tryptophan to tRNA(Trp). This Rickettsia felis (strain ATCC VR-1525 / URRWXCal2) (Rickettsia azadi) protein is Tryptophan--tRNA ligase.